The chain runs to 261 residues: Putative imidazole glycerol phosphate synthase subunit hisF2 (261 aa).

The active site involves aspartate 138.

This sequence belongs to the HisA/HisF family. In terms of assembly, heterodimer of HisH and HisF.

It localises to the cytoplasm. It catalyses the reaction 5-[(5-phospho-1-deoxy-D-ribulos-1-ylimino)methylamino]-1-(5-phospho-beta-D-ribosyl)imidazole-4-carboxamide + L-glutamine = D-erythro-1-(imidazol-4-yl)glycerol 3-phosphate + 5-amino-1-(5-phospho-beta-D-ribosyl)imidazole-4-carboxamide + L-glutamate + H(+). Its pathway is amino-acid biosynthesis; L-histidine biosynthesis; L-histidine from 5-phospho-alpha-D-ribose 1-diphosphate: step 5/9. Functionally, IGPS catalyzes the conversion of PRFAR and glutamine to IGP, AICAR and glutamate. The HisF subunit catalyzes the cyclization activity that produces IGP and AICAR from PRFAR using the ammonia provided by the HisH subunit. The polypeptide is Putative imidazole glycerol phosphate synthase subunit hisF2 (hisF2) (Prochlorococcus marinus (strain MIT 9313)).